The chain runs to 86 residues: Large ribosomal subunit protein bL27 (86 aa).

The disordered stretch occupies residues 1–21 (MAHHKGGGSSRNGKDSNPQYL).

It belongs to the bacterial ribosomal protein bL27 family.

The chain is Large ribosomal subunit protein bL27 from Coprothermobacter proteolyticus (strain ATCC 35245 / DSM 5265 / OCM 4 / BT).